A 461-amino-acid polypeptide reads, in one-letter code: Argininosuccinate lyase (461 aa).

Belongs to the lyase 1 family. Argininosuccinate lyase subfamily.

The protein resides in the cytoplasm. The enzyme catalyses 2-(N(omega)-L-arginino)succinate = fumarate + L-arginine. The protein operates within amino-acid biosynthesis; L-arginine biosynthesis; L-arginine from L-ornithine and carbamoyl phosphate: step 3/3. The protein is Argininosuccinate lyase of Aeromonas hydrophila subsp. hydrophila (strain ATCC 7966 / DSM 30187 / BCRC 13018 / CCUG 14551 / JCM 1027 / KCTC 2358 / NCIMB 9240 / NCTC 8049).